A 770-amino-acid chain; its full sequence is Lysine-specific histone demethylase 1 (770 aa).

Positions 1–21 (MSSDTGSEYLDEEIRGDELGP) are disordered. The SWIRM domain maps to 28 to 126 (LAAAASAARL…FGRYVRSTKI (99 aa)). FAD is bound at residue 137-165 (VIVIGAGAAGISAATQLESFGFDVIVLEA). The disordered stretch occupies residues 718-739 (NEAVADIPNAPNAPNAQKPEEI).

It belongs to the flavin monoamine oxidase family. Probably part of a large repressor complex. Interacts with CoREST protein spr-1. Interacts with chromobox protein homolog hpl-1. The cofactor is FAD.

Its subcellular location is the nucleus. It carries out the reaction N(6),N(6)-dimethyl-L-lysyl(4)-[histone H3] + 2 A + 2 H2O = L-lysyl(4)-[histone H3] + 2 formaldehyde + 2 AH2. In terms of biological role, histone demethylase that specifically demethylates 'Lys-4' of histone H3, a specific tag for epigenetic transcriptional activation, thereby acting as a corepressor. Acts by oxidizing the substrate by FAD to generate the corresponding imine that is subsequently hydrolyzed. Demethylates both mono- and di-methylated 'Lys-4' of histone H3. May be involved in H3 demethylation in mitotic cells including gut and embryonic cells. Participates in the transcriptional repression of the presenilin protein hop-1. May act via the formation of a multiprotein complex that remodel or modify the chromatin. Together with met-2, set-17 and set-26, required for transgenerational fertility. Plays a role in developmental growth and lifespan regulation in response to ultraviolet-induced damage. The polypeptide is Lysine-specific histone demethylase 1 (Caenorhabditis elegans).